Here is a 487-residue protein sequence, read N- to C-terminus: Glycogen synthase (487 aa).

Lys23 is a binding site for ADP-alpha-D-glucose.

Belongs to the glycosyltransferase 1 family. Bacterial/plant glycogen synthase subfamily.

The enzyme catalyses [(1-&gt;4)-alpha-D-glucosyl](n) + ADP-alpha-D-glucose = [(1-&gt;4)-alpha-D-glucosyl](n+1) + ADP + H(+). It participates in glycan biosynthesis; glycogen biosynthesis. Functionally, synthesizes alpha-1,4-glucan chains using ADP-glucose. The sequence is that of Glycogen synthase from Pseudomonas fluorescens (strain Pf0-1).